A 385-amino-acid polypeptide reads, in one-letter code: Glucans biosynthesis protein C (385 aa).

10 helical membrane passes run 17–37 (AWLM…SHTW), 60–80 (MQVF…RYPL), 91–111 (VGIP…IMLQ), 137–157 (ISHL…VWIF), 173–193 (KFSM…YAVI), 212–232 (FIVM…LAFI), 245–262 (RGST…LLNQ), 274–294 (TESV…FSFG), 311–331 (ASLF…AYIT), and 338–358 (WLGF…LYEI).

Belongs to the acyltransferase 3 family. OpgC subfamily.

The protein localises to the cell membrane. It participates in glycan metabolism; osmoregulated periplasmic glucan (OPG) biosynthesis. Its function is as follows. Necessary for the succinyl substitution of periplasmic glucans. Could catalyze the transfer of succinyl residues from the cytoplasmic side of the membrane to the nascent glucan backbones on the periplasmic side of the membrane. This Escherichia coli O81 (strain ED1a) protein is Glucans biosynthesis protein C.